The following is a 699-amino-acid chain: MIQHPTDTPEVAADAAAEPERAAGAAGATPQPSQDAVEPAADVDAATASLAAEDDDEPVLPQVPEEAGDEVAAGPLAIGRSAIAQAVRLAPTSPGVYRMLNAASDVLYVGKAKNVKKRLASYARPTGHVVRISRMIAATVSVEIISTATETEALLLEANLIKQLRPRFNVLLRDDKSFPYILITGDHWAPQIIKHRGAQSRPGRYFGPFASVGSVNRTITALQRAFLMRSCTDAFFESRTRPCLLYQIKRCAGPCTGEIDFPGYTALVREATDFLSGRSRLVKQELAGEMEKASAELEFETAALYRDRLAALSAIQSQQGINPRTVEEADVFAIHQEGGYFCVEVFFFRTGQNWGNRAYFPRAEKTFTVEEVLAAFLAQFYDDKAPPKQILLSHRIEECELLAEALCIKSGHKVEILTPQRGEKKELVGHALTNAREALGRKLADTATQTRLLQGLVTTLKLPHTPKRIEVYDNSHIQGTNAVGAMIVAGPDGFIKNQYRKFNIRSEGITPGDDYGMMREVLERRFKRLLAPPPEAEAGKPKPDDEVPQWPDLVIIDGGRGQLNAVQEIFQALGLSTVTLMAVAKGPDRDAGRETLFMPDRLPIKLEPRDPVLYFIQRLRDEAHRFVIGSHRKLRKKDIREAGLQEIPGIGPSRKRALLHHFGTLKEIERASLGDLGKVPGISAESAKRIFDYFHPQPG.

Positions Met1–Ala51 are enriched in low complexity. A disordered region spans residues Met1–Val59. One can recognise a GIY-YIG domain in the interval Thr92 to Val170. Residues Arg280–Ile315 form the UVR domain.

The protein belongs to the UvrC family. Interacts with UvrB in an incision complex.

It is found in the cytoplasm. The UvrABC repair system catalyzes the recognition and processing of DNA lesions. UvrC both incises the 5' and 3' sides of the lesion. The N-terminal half is responsible for the 3' incision and the C-terminal half is responsible for the 5' incision. The protein is UvrABC system protein C of Rhodopseudomonas palustris (strain BisB18).